The sequence spans 428 residues: MAASAIFLMDSKGKVLISRNYRGDVPMSVASKFISKILEEEDLNLKPIIQEDGISYIYVKHNNLFLLATTERNANAATILLFLYKMIEVFNEYFKELEEESIRDNFVVIYELMDEMMDFGYPQSTEPKILQEYITQEGYKLERGARGMVLPAAITGAVSWRKEGIKYNKNEVFLDVVESINLLVSANGTVLRSEIVGAVKMKSKLSGMPELRLGLNDKILFENSAKTGAPKGKGVELEDVKFHQCVRLSKFENDRTISFIPPDGEFELMSYRLNTTVKPLIWVECISDTHAHSRVEYMVKAKSQFKGKSIANNVEIIVPVPPDADTPKFRCTVGTCKYAPEKDAIIWTIKQFPGGGREFLMRAHFGLPSISDEKPATKPPIMVKFEIPYYTVSGIQVRYLKIIEKSGYQALPWVRYVCLSGDYQFRTS.

Ala2 carries the post-translational modification N-acetylalanine; partial. An MHD domain is found at 169–426; sequence KNEVFLDVVE…VCLSGDYQFR (258 aa).

Belongs to the adaptor complexes medium subunit family. In terms of assembly, adaptor protein complex 1 (AP-1) is a heterotetramer composed of two large adaptins (gamma-type subunit and beta-type subunit), a medium adaptin (mu-type subunit) and a small adaptin (sigma-type subunit).

Its subcellular location is the golgi apparatus. The protein localises to the trans-Golgi network. It localises to the cytoplasmic vesicle. It is found in the clathrin-coated vesicle membrane. Functionally, subunit of clathrin-associated adaptor protein complex 1 that plays a role in protein sorting in the trans-Golgi network (TGN) and endosomes. The AP complexes mediate the recruitment of clathrin to membranes and the recognition of sorting signals within the cytosolic tails of transmembrane cargo molecules. Also involved in early steps of phagocytosis and macropinocytosis. The polypeptide is AP-1 complex subunit mu (apm1) (Dictyostelium discoideum (Social amoeba)).